Reading from the N-terminus, the 205-residue chain is Glycerol-3-phosphate acyltransferase (205 aa).

6 helical membrane passes run 8-28 (IALFTLLVSYLLGSLPSGYLA), 57-77 (TPALFVFFIDVTKGIGAILIA), 84-104 (ESLQIAAGLASLSGHIWPVWL), 118-138 (VFLGISWQVGLGSLGIFLLIL), 143-163 (IVSLASISAAISLPVLMLINS), and 164-184 (KETFSIPYIVISFIAMILVLW).

The protein belongs to the PlsY family. Probably interacts with PlsX.

It is found in the cell inner membrane. It catalyses the reaction an acyl phosphate + sn-glycerol 3-phosphate = a 1-acyl-sn-glycero-3-phosphate + phosphate. The protein operates within lipid metabolism; phospholipid metabolism. Its function is as follows. Catalyzes the transfer of an acyl group from acyl-phosphate (acyl-PO(4)) to glycerol-3-phosphate (G3P) to form lysophosphatidic acid (LPA). This enzyme utilizes acyl-phosphate as fatty acyl donor, but not acyl-CoA or acyl-ACP. This Prochlorococcus marinus (strain SARG / CCMP1375 / SS120) protein is Glycerol-3-phosphate acyltransferase.